Consider the following 214-residue polypeptide: Leucyl/phenylalanyl-tRNA--protein transferase (214 aa).

This sequence belongs to the L/F-transferase family.

The protein localises to the cytoplasm. It catalyses the reaction N-terminal L-lysyl-[protein] + L-leucyl-tRNA(Leu) = N-terminal L-leucyl-L-lysyl-[protein] + tRNA(Leu) + H(+). It carries out the reaction N-terminal L-arginyl-[protein] + L-leucyl-tRNA(Leu) = N-terminal L-leucyl-L-arginyl-[protein] + tRNA(Leu) + H(+). The enzyme catalyses L-phenylalanyl-tRNA(Phe) + an N-terminal L-alpha-aminoacyl-[protein] = an N-terminal L-phenylalanyl-L-alpha-aminoacyl-[protein] + tRNA(Phe). Functions in the N-end rule pathway of protein degradation where it conjugates Leu, Phe and, less efficiently, Met from aminoacyl-tRNAs to the N-termini of proteins containing an N-terminal arginine or lysine. This is Leucyl/phenylalanyl-tRNA--protein transferase from Cereibacter sphaeroides (strain KD131 / KCTC 12085) (Rhodobacter sphaeroides).